Consider the following 169-residue polypeptide: MRVSVFAVGRMKSGPERELVERYFDRFAKAGPPLGLEFAGVSEIPESRGQTAQLRKAEEAQRIHEALDNAKSGGTSSGGAALILLDERGKTLGSEAFAAIVGRMRDDGKRQLIVAIGGPDGHDPALRSRADLVLALGELTWPHQIARILIAEQLYRAATILAGHPYHRS.

S-adenosyl-L-methionine contacts are provided by residues leucine 85, glycine 117, and 136 to 141 (LGELTW).

This sequence belongs to the RNA methyltransferase RlmH family. As to quaternary structure, homodimer.

The protein resides in the cytoplasm. The catalysed reaction is pseudouridine(1915) in 23S rRNA + S-adenosyl-L-methionine = N(3)-methylpseudouridine(1915) in 23S rRNA + S-adenosyl-L-homocysteine + H(+). Functionally, specifically methylates the pseudouridine at position 1915 (m3Psi1915) in 23S rRNA. This chain is Ribosomal RNA large subunit methyltransferase H, found in Brucella abortus biovar 1 (strain 9-941).